The sequence spans 502 residues: Inosine-5'-monophosphate dehydrogenase 2 (502 aa).

Residue Ser2 is modified to N-acetylserine. Residues 166-225 (MKSCENKDYYVPWDIDLDKIEAVLEDKQKGFVVLEKEGETVNVVTKDDVERVKGYPKLGS) enclose the CBS domain. Residues 264–266 (DSS) and 314–316 (GMG) each bind NAD(+). The K(+) site is built by Gly316 and Gly318. Ser319 is a binding site for IMP. Cys321 lines the K(+) pocket. Residue Cys321 is the Thioimidate intermediate of the active site. Residues 354–356 (DGG), 377–378 (GS), and 401–405 (YRGMG) contribute to the IMP site. Arg417 acts as the Proton acceptor in catalysis. Position 429 (Gln429) interacts with IMP. Glu488, Gly489, and Gly490 together coordinate K(+).

Belongs to the IMPDH/GMPR family. In terms of assembly, homotetramer. Requires K(+) as cofactor.

The protein resides in the cytoplasm. It carries out the reaction IMP + NAD(+) + H2O = XMP + NADH + H(+). The protein operates within purine metabolism; XMP biosynthesis via de novo pathway; XMP from IMP: step 1/1. Mycophenolic acid (MPA) is a non-competitive inhibitor that prevents formation of the closed enzyme conformation by binding to the same site as the amobile flap. In contrast, mizoribine monophosphate (MZP) is a competitive inhibitor that induces the closed conformation. MPA is a potent inhibitor of mammalian IMPDHs but a poor inhibitor of the bacterial enzymes. MZP is a more potent inhibitor of bacterial IMPDH. Functionally, catalyzes the conversion of inosine 5'-phosphate (IMP) to xanthosine 5'-phosphate (XMP), the first committed and rate-limiting step in the de novo synthesis of guanine nucleotides, and therefore plays an important role in the regulation of cell growth. The polypeptide is Inosine-5'-monophosphate dehydrogenase 2 (Arabidopsis thaliana (Mouse-ear cress)).